A 205-amino-acid polypeptide reads, in one-letter code: MDVRFPPYIFSMPHLIYNSWLSLNAPKLAQLQLQSIKLVGQDKSINQSELPVNSENISIRVETETNIDSLAKEEKLSEHVHDEKADKIEKTSEDNDTSTLLKLKRRVACDICSKSFCDKGALKIHTSAVHLREMHTCTVTGCGKQFSSRRSRNRHSSNNNPKLHMPESLTLTGSGLSMKTSLDTFWPTRFLLGKDHPLDLSLNLV.

2 C2H2-type zinc fingers span residues 107–130 (VACDICSKSFCDKGALKIHTSAVH) and 135–164 (HTCTVTGCGKQFSSRRSRNRHSSNNNPKLH). The segment at 145 to 168 (QFSSRRSRNRHSSNNNPKLHMPES) is disordered.

As to expression, expressed in the VA and VB motor neurons and at lower levels in the SABV neuron pair.

It localises to the nucleus. Functionally, probable transcription factor. Involved in motor neuron fate determination and maintenance, acting as a transcriptional repressor to counteract gene activation by transcription factor unc-3 in a subset of motor neurons. Required throughout development to repress transcription by unc-3, probably acting by binding to specific promoter elements. Represses expression of DA and DB motor neuron-specific effector genes, such as unc-129 and unc-53, in VA and VB motor neurons. The chain is Basonuclin zinc finger protein homolog from Caenorhabditis elegans.